The chain runs to 432 residues: Short/branched chain specific acyl-CoA dehydrogenase, mitochondrial (432 aa).

Residues 1–33 (MEGLAVRLLRGSRLLRRNFPTCLSSWKIPPHVS) constitute a mitochondrion transit peptide. Lysine 70 is modified (N6-acetyllysine; alternate). Lysine 70 carries the N6-succinyllysine; alternate modification. Residues 174-183 (FCLSEAGAGS) and 207-209 (WIS) contribute to the FAD site. Serine 183 contacts substrate. Serine 183 carries the phosphoserine modification. The substrate site is built by tyrosine 229 and tyrosine 283. Lysine 284 carries the post-translational modification N6-acetyllysine; alternate. Residue lysine 284 is modified to N6-succinyllysine; alternate. A substrate-binding site is contributed by 291–294 (NEGR). FAD is bound by residues arginine 319, glutamine 330, and 387-391 (EWMGG). Glutamate 414 (proton acceptor) is an active-site residue. Position 416–418 (416–418 (ASN)) interacts with FAD. Position 426 is an N6-acetyllysine (lysine 426).

This sequence belongs to the acyl-CoA dehydrogenase family. As to quaternary structure, homotetramer. The cofactor is FAD.

The protein resides in the mitochondrion matrix. It carries out the reaction 2-methylbutanoyl-CoA + oxidized [electron-transfer flavoprotein] + H(+) = (2E)-2-methylbut-2-enoyl-CoA + reduced [electron-transfer flavoprotein]. The enzyme catalyses (2S)-2-methylbutanoyl-CoA + oxidized [electron-transfer flavoprotein] + H(+) = (2E)-2-methylbut-2-enoyl-CoA + reduced [electron-transfer flavoprotein]. It catalyses the reaction (2R)-2-methylbutanoyl-CoA + oxidized [electron-transfer flavoprotein] + H(+) = ethylacryloyl-CoA + reduced [electron-transfer flavoprotein]. The catalysed reaction is butanoyl-CoA + oxidized [electron-transfer flavoprotein] + H(+) = (2E)-butenoyl-CoA + reduced [electron-transfer flavoprotein]. It carries out the reaction 2-methylpropanoyl-CoA + oxidized [electron-transfer flavoprotein] + H(+) = 2-methylpropenoyl-CoA + reduced [electron-transfer flavoprotein]. The enzyme catalyses hexanoyl-CoA + oxidized [electron-transfer flavoprotein] + H(+) = (2E)-hexenoyl-CoA + reduced [electron-transfer flavoprotein]. It catalyses the reaction valproyl-CoA + oxidized [electron-transfer flavoprotein] + H(+) = (2E)-2-propylpent-2-enoyl-CoA + reduced [electron-transfer flavoprotein]. Its pathway is lipid metabolism; mitochondrial fatty acid beta-oxidation. The protein operates within amino-acid degradation; L-isoleucine degradation. Its function is as follows. Short and branched chain specific acyl-CoA dehydrogenase that catalyzes the removal of one hydrogen from C-2 and C-3 of the fatty acyl-CoA thioester, resulting in the formation of trans-2-enoyl-CoA. Among the different mitochondrial acyl-CoA dehydrogenases, acts specifically on short and branched chain acyl-CoA derivatives such as (S)-2-methylbutyryl-CoA as well as short straight chain acyl-CoAs such as butyryl-CoA. Plays an important role in the metabolism of L-isoleucine by catalyzing the dehydrogenation of 2-methylbutyryl-CoA, one of the steps of the L-isoleucine catabolic pathway. Can also act on valproyl-CoA, a metabolite of the valproic acid drug. The chain is Short/branched chain specific acyl-CoA dehydrogenase, mitochondrial (ACADSB) from Pongo abelii (Sumatran orangutan).